Consider the following 153-residue polypeptide: Large ribosomal subunit protein uL13 (153 aa).

This sequence belongs to the universal ribosomal protein uL13 family. In terms of assembly, part of the 50S ribosomal subunit.

Functionally, this protein is one of the early assembly proteins of the 50S ribosomal subunit, although it is not seen to bind rRNA by itself. It is important during the early stages of 50S assembly. The sequence is that of Large ribosomal subunit protein uL13 from Xanthobacter autotrophicus (strain ATCC BAA-1158 / Py2).